Here is a 399-residue protein sequence, read N- to C-terminus: Transcription factor UNE10 (399 aa).

Disordered stretches follow at residues 119–158 (QSKPGGVGSTRVGSCSDGRTMGGGKRARVAPEWSGGGSQR) and 173–228 (MGSH…RRDK). Residues 178 to 201 (NTIDDHDSVCHSRPQMEDEEEKKA) are compositionally biased toward basic and acidic residues. Residues 213 to 262 (RAAAIHNQSERKRRDKINQRMKTLQKLVPNSSKTDKASMLDEVIEYLKQL) form the bHLH domain.

Homodimer. Associates to PTAC12/HMR/PAP5 which acts as a transcriptional coactivator. Interacts with the Pfr form of phyB but barely with that of phyA. Binds to COP1. Ubiquitinated and subsequently targeted to protein degradation by COP1 in the dark, but not in far-red light. As to expression, mainly expressed in stems, leaves, seedlings, fruits and flowers, and, to a lower extent, in roots.

Its subcellular location is the nucleus. With respect to regulation, stabilized by phyA but destabilized by phyB. Accumulates in the dark but not in far-red light upon MG132 treatment, a 26S proteasome inhibitor (at protein level). Functionally, transcription factor binding to G-box elements (5'-CACGTG-3') in target genes promoters, particularly in far-red light but barely in the dark. Required during the fertilization of ovules by pollen. Repressor of phytochrome A-mediated far-red light responses including seed germination, suppression of hypocotyl elongation, and randomization of hypocotyl growth orientation. Does not inhibit phyB-induced red light responses. This Arabidopsis thaliana (Mouse-ear cress) protein is Transcription factor UNE10.